The primary structure comprises 1007 residues: Beta-galactosidase (1007 aa).

The interval 29 to 48 (TIPPHSDHESFQSQEELEEG) is disordered. Glutamate 465 functions as the Proton donor in the catalytic mechanism. Catalysis depends on glutamate 532, which acts as the Nucleophile.

The protein belongs to the glycosyl hydrolase 2 family. As to quaternary structure, monomer.

The enzyme catalyses Hydrolysis of terminal non-reducing beta-D-galactose residues in beta-D-galactosides.. The chain is Beta-galactosidase (lacZ) from Lactobacillus delbrueckii subsp. bulgaricus.